The primary structure comprises 541 residues: Thioredoxin reductase (541 aa).

FAD-binding positions include 51-52 (PG), 71-74 (DYVK), 87-88 (TC), 92-96 (GCVPK), Ala-161, Asp-357, and 364-366 (ELA). Cys-88 and Cys-93 are joined by a disulfide. Positions 438–452 (HRQKHIRAQKDEYDL) are loop important for the interaction with TRX1. Position 509 (His-509) interacts with FAD. Catalysis depends on His-509, which acts as the Proton acceptor. Residues Cys-535 and Cys-540 are joined by a disulfide bond.

The protein belongs to the class-I pyridine nucleotide-disulfide oxidoreductase family. Homodimer. Requires FAD as cofactor.

It localises to the cytoplasm. The enzyme catalyses [thioredoxin]-dithiol + NADP(+) = [thioredoxin]-disulfide + NADPH + H(+). Functionally, catalyzes the transfer of electrons from NADPH to thioredoxins TRX1, TRX2 and TRX3, which in turn act as reductants of disulfide containing proteins. Able to reduce nitroglutathione (GSNO), a compound involved in the transport of nitric oxide (NO); however, TRX1 is more efficient in reducing GSNO. Has no catalytic activity towards oxidized glutathione (GSSG). This is Thioredoxin reductase from Plasmodium falciparum (isolate FCH-5).